The sequence spans 337 residues: Terpene cyclase (337 aa).

A helical membrane pass occupies residues 5-25; that stretch reads ASVIFLSLSVLAAVGVWGPFV. Asn-65 carries an N-linked (GlcNAc...) asparagine glycan. The next 7 helical transmembrane spans lie at 72–92, 111–131, 149–169, 177–197, 222–242, 267–287, and 298–318; these read IAYC…VILC, GLLS…MSFI, ALIL…LNVL, IWGI…ARII, VAGG…LGIF, LQVD…HELI, and LGGL…AAAW.

This sequence belongs to the membrane-bound ascI terpene cyclase family.

Its subcellular location is the membrane. It participates in antifungal biosynthesis. Its function is as follows. Cyclase; part of the gene cluster that mediates the biosynthesis of the tetrahydropyranyl antifungal agent lanomycin that acts as an inhibitor of CYP51 and blocks the ergosterol biosynthesis. The biosynthesis probably begins with the formation of an hexaketide, followed by methionine mediated alkylation of C-2 and C-6, and methylation of the reduced C-3 oxygen, pyran forming reductive ring closure, oxygenation of C-4, beta-keto reduction, enoyl reduction and dehydration of the remaining oxygens, and finally, acylation with glycine to complete the biosynthesis. The polypeptide is Terpene cyclase (Pyrenophora dematioidea (Helminthosporium dematioideum)).